A 332-amino-acid chain; its full sequence is NADH-quinone oxidoreductase subunit H (332 aa).

The next 9 membrane-spanning stretches (helical) occupy residues 4-24 (FAFF…IFAS), 44-64 (IGPD…MIKL), 78-98 (FIFA…LAAI), 120-140 (VALL…FLGG), 165-185 (VGAL…LVDI), 194-214 (FSWL…ALFI), 255-275 (IAGA…FWII), 279-299 (IMMI…RAAF), and 312-332 (YLIL…AVLL).

The protein belongs to the complex I subunit 1 family. As to quaternary structure, NDH-1 is composed of 14 different subunits. Subunits NuoA, H, J, K, L, M, N constitute the membrane sector of the complex.

The protein resides in the cell inner membrane. The catalysed reaction is a quinone + NADH + 5 H(+)(in) = a quinol + NAD(+) + 4 H(+)(out). Functionally, NDH-1 shuttles electrons from NADH, via FMN and iron-sulfur (Fe-S) centers, to quinones in the respiratory chain. The immediate electron acceptor for the enzyme in this species is believed to be ubiquinone. Couples the redox reaction to proton translocation (for every two electrons transferred, four hydrogen ions are translocated across the cytoplasmic membrane), and thus conserves the redox energy in a proton gradient. This subunit may bind ubiquinone. This is NADH-quinone oxidoreductase subunit H from Campylobacter jejuni subsp. jejuni serotype O:6 (strain 81116 / NCTC 11828).